The chain runs to 278 residues: NADPH-dependent 7-cyano-7-deazaguanine reductase (278 aa).

Ile87–Ser89 serves as a coordination point for substrate. Ser89–Lys90 contacts NADPH. Cys185 (thioimide intermediate) is an active-site residue. Asp192 functions as the Proton donor in the catalytic mechanism. His224–Glu225 contributes to the substrate binding site. Arg253–Gly254 contributes to the NADPH binding site. The interval Gly255–Gln278 is disordered. The span at Tyr261–Gln278 shows a compositional bias: polar residues.

The protein belongs to the GTP cyclohydrolase I family. QueF type 2 subfamily. As to quaternary structure, homodimer.

Its subcellular location is the cytoplasm. It catalyses the reaction 7-aminomethyl-7-carbaguanine + 2 NADP(+) = 7-cyano-7-deazaguanine + 2 NADPH + 3 H(+). It participates in tRNA modification; tRNA-queuosine biosynthesis. Functionally, catalyzes the NADPH-dependent reduction of 7-cyano-7-deazaguanine (preQ0) to 7-aminomethyl-7-deazaguanine (preQ1). This chain is NADPH-dependent 7-cyano-7-deazaguanine reductase, found in Coxiella burnetii (strain Dugway 5J108-111).